Reading from the N-terminus, the 103-residue chain is Small ribosomal subunit protein uS10 (103 aa).

This sequence belongs to the universal ribosomal protein uS10 family. In terms of assembly, part of the 30S ribosomal subunit.

Involved in the binding of tRNA to the ribosomes. The polypeptide is Small ribosomal subunit protein uS10 (Neisseria gonorrhoeae (strain ATCC 700825 / FA 1090)).